The primary structure comprises 166 residues: Regulatory protein RecX (166 aa).

The protein belongs to the RecX family.

It is found in the cytoplasm. In terms of biological role, modulates RecA activity. This Salmonella arizonae (strain ATCC BAA-731 / CDC346-86 / RSK2980) protein is Regulatory protein RecX.